Here is a 253-residue protein sequence, read N- to C-terminus: Sugar fermentation stimulation protein homolog (253 aa).

It belongs to the SfsA family.

The protein is Sugar fermentation stimulation protein homolog of Chromohalobacter salexigens (strain ATCC BAA-138 / DSM 3043 / CIP 106854 / NCIMB 13768 / 1H11).